We begin with the raw amino-acid sequence, 176 residues long: Ribose 1,5-bisphosphate phosphokinase PhnN (176 aa).

10–17 (GPSGAGKD) lines the ATP pocket.

It belongs to the ribose 1,5-bisphosphokinase family.

The catalysed reaction is alpha-D-ribose 1,5-bisphosphate + ATP = 5-phospho-alpha-D-ribose 1-diphosphate + ADP. The protein operates within metabolic intermediate biosynthesis; 5-phospho-alpha-D-ribose 1-diphosphate biosynthesis; 5-phospho-alpha-D-ribose 1-diphosphate from D-ribose 5-phosphate (route II): step 3/3. In terms of biological role, catalyzes the phosphorylation of ribose 1,5-bisphosphate to 5-phospho-D-ribosyl alpha-1-diphosphate (PRPP). This Methylobacterium radiotolerans (strain ATCC 27329 / DSM 1819 / JCM 2831 / NBRC 15690 / NCIMB 10815 / 0-1) protein is Ribose 1,5-bisphosphate phosphokinase PhnN.